We begin with the raw amino-acid sequence, 394 residues long: Elongation factor Tu 1 (394 aa).

Residues 10–204 (KPHVNVGTIG…ALDSYIPEPQ (195 aa)) enclose the tr-type G domain. A G1 region spans residues 19-26 (GHVDHGKT). Residue 19–26 (GHVDHGKT) participates in GTP binding. A Mg(2+)-binding site is contributed by Thr-26. A G2 region spans residues 60–64 (GITIS). The tract at residues 81-84 (DCPG) is G3. Residues 81-85 (DCPGH) and 136-139 (NKCD) each bind GTP. Residues 136–139 (NKCD) are G4. Positions 174-176 (SAL) are G5.

It belongs to the TRAFAC class translation factor GTPase superfamily. Classic translation factor GTPase family. EF-Tu/EF-1A subfamily. In terms of assembly, monomer.

It is found in the cytoplasm. It catalyses the reaction GTP + H2O = GDP + phosphate + H(+). Functionally, GTP hydrolase that promotes the GTP-dependent binding of aminoacyl-tRNA to the A-site of ribosomes during protein biosynthesis. This Pseudoalteromonas translucida (strain TAC 125) protein is Elongation factor Tu 1.